The primary structure comprises 58 residues: Large ribosomal subunit protein bL32 (58 aa).

Disordered regions lie at residues 1-22 (MAVP…HWKR) and 39-58 (LSGR…DDEE).

This sequence belongs to the bacterial ribosomal protein bL32 family.

This is Large ribosomal subunit protein bL32 from Crocosphaera subtropica (strain ATCC 51142 / BH68) (Cyanothece sp. (strain ATCC 51142)).